Reading from the N-terminus, the 92-residue chain is Small ribosomal subunit protein uS19 (92 aa).

This sequence belongs to the universal ribosomal protein uS19 family.

In terms of biological role, protein S19 forms a complex with S13 that binds strongly to the 16S ribosomal RNA. The protein is Small ribosomal subunit protein uS19 of Proteus mirabilis (strain HI4320).